Consider the following 226-residue polypeptide: Ribonuclease HII (226 aa).

An RNase H type-2 domain is found at G29 to Q220. Positions 35, 36, and 129 each coordinate a divalent metal cation.

Belongs to the RNase HII family. The cofactor is Mn(2+). Requires Mg(2+) as cofactor.

Its subcellular location is the cytoplasm. It carries out the reaction Endonucleolytic cleavage to 5'-phosphomonoester.. Its function is as follows. Endonuclease that specifically degrades the RNA of RNA-DNA hybrids. In Rhodococcus erythropolis (strain PR4 / NBRC 100887), this protein is Ribonuclease HII.